Here is a 280-residue protein sequence, read N- to C-terminus: Rhomboid-like protein 11, chloroplastic (280 aa).

A chloroplast-targeting transit peptide spans 1–57 (MSQLLHLHRLSLPQSSLRFRFPPLHRRRAASSPTNSTQPPLQFRPLTVSRSQITCRF). Over 58–82 (SQSDITPQFELDKAKDNRKPQKRAN) the chain is Stromal. The helical transmembrane segment at 83–103 (GIFWIILINLGIYLADHFFQV) threads the bilayer. Residues 104 to 117 (RGIKSLYLYHNFPA) lie on the Chloroplast intermembrane side of the membrane. Residues 118–140 (WYQFVTATFCHANWNHLSSNLFF) form a helical membrane-spanning segment. Over 141-154 (LYIFGKLVEEEEGN) the chain is Stromal. The chain crosses the membrane as a helical span at residues 155-175 (FGLWLSYLFTGVGANLVSWLV). Residues 176-178 (LPR) are Chloroplast intermembrane-facing. A helical membrane pass occupies residues 179–199 (NAVSVGASGAVFGLFAISVLV). S186 (nucleophile) is an active-site residue. The Stromal segment spans residues 200–243 (KMSWDWRKILEVLILGQFVIERVMEAAQASAGLSGTIYGGYSLQ). A helical transmembrane segment spans residues 244 to 264 (TVNHIAHLSGALVGVVLVWLL). H250 serves as the catalytic Charge relay system. At 265-280 (SKFPSASMDQDVKKSS) the chain is on the chloroplast intermembrane side.

The protein belongs to the peptidase S54 family. As to quaternary structure, homooligomer.

It localises to the plastid. It is found in the chloroplast inner membrane. Its function is as follows. Rhomboid-type serine protease that catalyzes intramembrane proteolysis. May be involved in TIC22 processing during its import. The chain is Rhomboid-like protein 11, chloroplastic from Arabidopsis thaliana (Mouse-ear cress).